A 70-amino-acid polypeptide reads, in one-letter code: Conotoxin Lt3.4 (70 aa).

Positions 1–24 are cleaved as a signal peptide; that stretch reads MLKMGVLLFTFLVLFPLAMFQLDA. Positions 25–54 are excised as a propeptide; the sequence is DQPVERYAENKQDLNRDERMKIMLSALRQR. At Gln55 the chain carries Pyrrolidone carboxylic acid. 3 disulfides stabilise this stretch: Cys56/Cys68, Cys57/Cys66, and Cys62/Cys69.

Belongs to the conotoxin M superfamily. In terms of tissue distribution, expressed by the venom duct.

Its subcellular location is the secreted. This is Conotoxin Lt3.4 from Conus litteratus (Lettered cone).